Consider the following 762-residue polypeptide: Subtilisin-like protease SBT3.11 (762 aa).

Positions 1–16 (MMSSIVSWWFFWVISA) are cleaved as a signal peptide. Positions 17 to 116 (VCILKVEFNI…VTPNTFYELQ (100 aa)) are cleaved as a propeptide — activation peptide. Positions 37 to 115 (VHIVYLGEKE…QVTPNTFYEL (79 aa)) constitute an Inhibitor I9 domain. A Peptidase S8 domain is found at 120 to 609 (TFDYLGLSHS…GGLVNPNKAA (490 aa)). The Charge relay system role is filled by Asp150. Residue Asn206 is glycosylated (N-linked (GlcNAc...) asparagine). His226 serves as the catalytic Charge relay system. 2 N-linked (GlcNAc...) asparagine glycosylation sites follow: Asn241 and Asn371. Residue Ser540 is the Charge relay system of the active site.

This sequence belongs to the peptidase S8 family.

It is found in the secreted. The sequence is that of Subtilisin-like protease SBT3.11 from Arabidopsis thaliana (Mouse-ear cress).